A 272-amino-acid chain; its full sequence is uncharacterized protein (272 aa).

Helical transmembrane passes span proline 9–valine 29, leucine 38–proline 58, alanine 154–leucine 174, and alanine 188–isoleucine 208. Topologically, residues alanine 209–alanine 272 are cytoplasmic.

Belongs to the MotA family.

The protein localises to the cell membrane. In terms of biological role, may be involved in some transport function. This is an uncharacterized protein from Bacillus subtilis (strain 168).